Reading from the N-terminus, the 613-residue chain is MSCKKRKSQISFNPRKNKKIKDYFSQVPKEEQNDPNTVKVDSKKMPRDITNTRDQRPLSPRKTRQDQTPPLNKKITVTLGVNSRKHKNMKYELTCRETSSLYAALNTLSAVREEVESQKGREMLVCGKEGIEGYLNLGMPVCCIPEGSHVVITFCQCKSKTQENKQFFESQDQASTNYVRFCIHAVGSKRKKILKCGELQKEGNKLCVYGFKGETIRDTLRKDGRFCTFIESDDWKLINDLDTIIENTQPVDELEGKLFQVAAELPKNPRVVSVTQNSGSENRNFHKLEEYIVNEYTTLKEEGKKLRAYIKEKSEKRKKKASLFKVHKEHFGKMTRNSTPVKVVKHLSRVSDSVGFLWWNNNGNAGCATCFVFKELYILTCQHVIASIVGEGIDSSEWANIISQCVKVTFDYEELLPTGDKFFMVKPWFEISDKHLDYAVLELKENGQEVPAGLYHRIRPVPHSGLIYIIGHPEGEKKSIDCCTVVPQSSRRKKCQENFQAREEAGFCFSTSFIHMYTQRSFQEMLHNSDVVTYDTSFFGGSSGSPVFDSNGSLVAMHAAGITCTYQAGVSNIIEFGSIMESIDDHMKQDKYKEWYNTISGNVQNVEMLSIDF.

Positions methionine 1–asparagine 72 are disordered. Residue lysine 19 forms a Glycyl lysine isopeptide (Lys-Gly) (interchain with G-Cter in SUMO2) linkage. At serine 25 the chain carries Phosphoserine. Lysine 29 participates in a covalent cross-link: Glycyl lysine isopeptide (Lys-Gly) (interchain with G-Cter in SUMO2). The segment covering valine 40–arginine 56 has biased composition (basic and acidic residues). A Glycyl lysine isopeptide (Lys-Gly) (interchain with G-Cter in SUMO2) cross-link involves residue lysine 62. Active-site charge relay system residues include histidine 383, aspartate 437, and serine 543.

The protein belongs to the FAM111 family. Interacts (via PIP-box) with PCNA; this interaction is direct. Autocatalytically cleaved; autocatalytic cleavage takes place in trans.

The protein localises to the nucleus. The protein resides in the chromosome. It localises to the cytoplasm. In terms of biological role, single-stranded DNA-binding serine protease that mediates the proteolytic cleavage of covalent DNA-protein cross-links (DPCs) during DNA synthesis, thereby playing a key role in maintaining genomic integrity. DPCs are highly toxic DNA lesions that interfere with essential chromatin transactions, such as replication and transcription, and which are induced by reactive agents, such as UV light or formaldehyde. Protects replication fork from stalling by removing DPCs, such as covalently trapped topoisomerase 1 (TOP1) adducts on DNA lesion, or poly(ADP-ribose) polymerase 1 (PARP1)-DNA complexes trapped by PARP inhibitors. Required for PCNA loading on replication sites. Promotes S-phase entry and DNA synthesis. The protein is Serine protease FAM111A of Mus musculus (Mouse).